Here is a 519-residue protein sequence, read N- to C-terminus: Bifunctional purine biosynthesis protein PurH (519 aa).

Residues 1 to 145 (MQPIQRALIS…KNHASVTVVV (145 aa)) form the MGS-like domain.

It belongs to the PurH family.

It carries out the reaction (6R)-10-formyltetrahydrofolate + 5-amino-1-(5-phospho-beta-D-ribosyl)imidazole-4-carboxamide = 5-formamido-1-(5-phospho-D-ribosyl)imidazole-4-carboxamide + (6S)-5,6,7,8-tetrahydrofolate. The enzyme catalyses IMP + H2O = 5-formamido-1-(5-phospho-D-ribosyl)imidazole-4-carboxamide. Its pathway is purine metabolism; IMP biosynthesis via de novo pathway; 5-formamido-1-(5-phospho-D-ribosyl)imidazole-4-carboxamide from 5-amino-1-(5-phospho-D-ribosyl)imidazole-4-carboxamide (10-formyl THF route): step 1/1. It functions in the pathway purine metabolism; IMP biosynthesis via de novo pathway; IMP from 5-formamido-1-(5-phospho-D-ribosyl)imidazole-4-carboxamide: step 1/1. The protein is Bifunctional purine biosynthesis protein PurH of Allochromatium vinosum (strain ATCC 17899 / DSM 180 / NBRC 103801 / NCIMB 10441 / D) (Chromatium vinosum).